Here is a 181-residue protein sequence, read N- to C-terminus: Small ribosomal subunit protein uS4 (181 aa).

The S4 RNA-binding domain maps to 106–168 (RRLQTLVYRK…PTSRIVKAKV (63 aa)).

This sequence belongs to the universal ribosomal protein uS4 family. Part of the 30S ribosomal subunit. Contacts protein S5. The interaction surface between S4 and S5 is involved in control of translational fidelity.

In terms of biological role, one of the primary rRNA binding proteins, it binds directly to 16S rRNA where it nucleates assembly of the body of the 30S subunit. With S5 and S12 plays an important role in translational accuracy. The polypeptide is Small ribosomal subunit protein uS4 (Caldivirga maquilingensis (strain ATCC 700844 / DSM 13496 / JCM 10307 / IC-167)).